The primary structure comprises 348 residues: Putative 4-hydroxythreonine-4-phosphate dehydrogenase 2 (348 aa).

Positions 180, 224, and 279 each coordinate a divalent metal cation.

The protein belongs to the PdxA family. As to quaternary structure, homodimer. The cofactor is Zn(2+). Mg(2+) serves as cofactor. It depends on Co(2+) as a cofactor.

It is found in the cytoplasm. The enzyme catalyses 4-(phosphooxy)-L-threonine + NAD(+) = 3-amino-2-oxopropyl phosphate + CO2 + NADH. Its pathway is cofactor biosynthesis; pyridoxine 5'-phosphate biosynthesis; pyridoxine 5'-phosphate from D-erythrose 4-phosphate: step 4/5. Its function is as follows. Catalyzes the NAD(P)-dependent oxidation of 4-(phosphooxy)-L-threonine (HTP) into 2-amino-3-oxo-4-(phosphooxy)butyric acid which spontaneously decarboxylates to form 3-amino-2-oxopropyl phosphate (AHAP). The protein is Putative 4-hydroxythreonine-4-phosphate dehydrogenase 2 of Rhizobium meliloti (strain 1021) (Ensifer meliloti).